The sequence spans 179 residues: Inosine/xanthosine triphosphatase (179 aa).

8–13 (TTNPAK) provides a ligand contact to substrate. Positions 38 and 68 each coordinate Mg(2+). 68–69 (EA) is a binding site for substrate.

This sequence belongs to the YjjX NTPase family. As to quaternary structure, homodimer. It depends on Mg(2+) as a cofactor. The cofactor is Mn(2+).

The enzyme catalyses XTP + H2O = XDP + phosphate + H(+). The catalysed reaction is ITP + H2O = IDP + phosphate + H(+). In terms of biological role, phosphatase that hydrolyzes non-canonical purine nucleotides such as XTP and ITP to their respective diphosphate derivatives. Probably excludes non-canonical purines from DNA/RNA precursor pool, thus preventing their incorporation into DNA/RNA and avoiding chromosomal lesions. In Pectobacterium carotovorum subsp. carotovorum (strain PC1), this protein is Inosine/xanthosine triphosphatase.